The following is a 407-amino-acid chain: Protein trichome birefringence-like 12 (407 aa).

Residues 21–41 form a helical; Signal-anchor for type II membrane protein membrane-spanning segment; the sequence is SLLPRILLLSLLLLLFYSLIL. Residues 130 to 132 carry the GDS motif motif; that stretch reads GDS. Positions 379–393 match the DCXHWCLPGXXDXWN motif motif; it reads DCMHWCLPGVPDTWV.

This sequence belongs to the PC-esterase family. TBL subfamily.

The protein localises to the membrane. In terms of biological role, may act as a bridging protein that binds pectin and other cell wall polysaccharides. Probably involved in maintaining esterification of pectins. May be involved in the specific O-acetylation of cell wall polymers. The chain is Protein trichome birefringence-like 12 (TBL12) from Arabidopsis thaliana (Mouse-ear cress).